Here is a 423-residue protein sequence, read N- to C-terminus: Protein phosphatase 2C 77 (423 aa).

Positions 74 to 95 (GDEINGSDEFDPRSMNQSEKKV) are disordered. The PPM-type phosphatase domain occupies 112 to 411 (LYGVTSICGR…DNISVVVVDL (300 aa)). Positions 165, 251, and 252 each coordinate Mg(2+). Cysteines 257 and 331 form a disulfide. Residues D337 and D402 each coordinate Mg(2+).

It belongs to the PP2C family. In terms of assembly, interacts with SPK1, CIPK15/PKS3, GPX3, SCAR1, SCAR2, SCAR3 and SCARL. Also interacts with CIPK24/SOS2. Binds to the fibrillin precursor protein. Interacts with ABA-bounded PYR1, PYL1, PYL2, PYL3, PYL4, PYL5, PYL6, PYL8 and PYL9, and with free PYL2, PYL3 and PYL4. Interacts with and represses GHR1, and, to a lesser extent, SRK2E/OST1. Mg(2+) is required as a cofactor. Mn(2+) serves as cofactor.

The enzyme catalyses O-phospho-L-seryl-[protein] + H2O = L-seryl-[protein] + phosphate. The catalysed reaction is O-phospho-L-threonyl-[protein] + H2O = L-threonyl-[protein] + phosphate. With respect to regulation, phosphatase activity repressed by oxidized ATGPX3, free fatty acids (e.g. arachidonic acid (20:4) and Linolenic acid (18:3)) and by H(2)O(2). Repressed by PYR/PYL/RCAR ABA receptors in an ABA-dependent manner. Its function is as follows. Repressor of the abscisic acid (ABA) signaling pathway that regulates numerous ABA responses, such as stomatal closure, osmotic water permeability of the plasma membrane (Pos), high light stress, response to glucose, seed germination and inhibition of vegetative growth. During the stomatal closure regulation, modulates the inward calcium-channel permeability as well as H(2)O(2) and oxidative burst in response to ABA and dehydration. Represses GHR1 and, to some extent, SRK2E/OST1, kinases involved in the regulation of SLAC1-dependent stomatal closure. Controls negatively fibrillin that is involved in mediating ABA-induced photoprotection. May be implicated in ABA content regulation. Involved in acquired thermotolerance of root growth and seedling survival. Required for the Erwinia amylovora harpin-induced (HrpN) drought tolerance. Involved in the hydrotropic response. This Arabidopsis thaliana (Mouse-ear cress) protein is Protein phosphatase 2C 77.